The following is a 47-amino-acid chain: MAKGKRTFQPNNRRRARVHGFRLRMRTRAGRAIVSARRRKGRDSLTA.

The protein belongs to the bacterial ribosomal protein bL34 family.

This is Large ribosomal subunit protein bL34 from Rhodococcus erythropolis (strain PR4 / NBRC 100887).